We begin with the raw amino-acid sequence, 1575 residues long: Ovochymase (1575 aa).

The signal sequence occupies residues 1 to 19; sequence MIVTFVALALSCCTPQVTA. Positions 36–280 constitute a Peptidase S1 1 domain; the sequence is IVGGEMAKLG…YSSWIANYTQ (245 aa). C61 and C77 are disulfide-bonded. Active-site charge relay system residues include H76 and D132. 3 cysteine pairs are disulfide-bonded: C166-C233, C199-C212, and C223-C256. The active-site Charge relay system is S227. N-linked (GlcNAc...) asparagine glycans are attached at residues N277 and N303. 4 cysteine pairs are disulfide-bonded: C300–C330, C358–C386, C432–C460, and C486–C507. CUB domains follow at residues 300–423 and 432–545; these read CSSN…FHAV and CGGI…YYFS. Residues N497, N513, and N549 are each glycosylated (N-linked (GlcNAc...) asparagine). The 236-residue stretch at 575-810 folds into the Peptidase S1 2 domain; that stretch reads IVNGDIAIAG…YIDWIIATAN (236 aa). C602 and C618 are joined by a disulfide. Residues H617 and D665 each act as charge relay system in the active site. 3 cysteine pairs are disulfide-bonded: C700–C766, C730–C745, and C756–C786. An N-linked (GlcNAc...) asparagine glycan is attached at N748. The active-site Charge relay system is the S760. An N-linked (GlcNAc...) asparagine glycan is attached at N810. 7 disulfides stabilise this stretch: C830–C859, C889–C913, C956–C984, C1012–C1034, C1080–C1108, C1135–C1158, and C1221–C1246. CUB domains are found at residues 830 to 949, 956 to 1070, 1080 to 1197, and 1221 to 1341; these read CIQL…YRLE, CGQL…FVEL, CGGV…YTAV, and CQDS…YKLM. 4 N-linked (GlcNAc...) asparagine glycosylation sites follow: N968, N1027, N1087, and N1090. Residue N1273 is glycosylated (N-linked (GlcNAc...) asparagine). The region spanning 1314–1575 is the Peptidase S1 3 domain; that stretch reads YNGGEISMLF…FLKWITKIIQ (262 aa). 2 disulfide bridges follow: C1376–C1392 and C1493–C1507. A glycan (N-linked (GlcNAc...) asparagine) is linked at N1511.

This sequence belongs to the peptidase S1 family. In terms of tissue distribution, expressed in the testis and ovary. Expressed in the gonads and gametes. Expressed in the follicle cells covering the vitelline coat of ovarian egg.

It localises to the secreted. May be responsible for elevation of the vitelline coat at the late developmental stage of oogenesis and during fertilization in ovarian eggs. The chain is Ovochymase from Halocynthia roretzi (Sea squirt).